The primary structure comprises 339 residues: Protein-glutamate methylesterase/protein-glutamine glutaminase (339 aa).

The Response regulatory domain maps to 2-119; it reads RIGVVNDMPM…EGNASSQSAR (118 aa). 4-aspartylphosphate is present on aspartate 53. In terms of domain architecture, CheB-type methylesterase spans 149–338; it reads PTPRRLIAIG…SRIIEACERS (190 aa). Catalysis depends on residues serine 160, histidine 187, and aspartate 280.

The protein belongs to the CheB family. Phosphorylated by CheA. Phosphorylation of the N-terminal regulatory domain activates the methylesterase activity.

The protein resides in the cytoplasm. The catalysed reaction is [protein]-L-glutamate 5-O-methyl ester + H2O = L-glutamyl-[protein] + methanol + H(+). It carries out the reaction L-glutaminyl-[protein] + H2O = L-glutamyl-[protein] + NH4(+). In terms of biological role, involved in chemotaxis. Part of a chemotaxis signal transduction system that modulates chemotaxis in response to various stimuli. Catalyzes the demethylation of specific methylglutamate residues introduced into the chemoreceptors (methyl-accepting chemotaxis proteins or MCP) by CheR. Also mediates the irreversible deamidation of specific glutamine residues to glutamic acid. The polypeptide is Protein-glutamate methylesterase/protein-glutamine glutaminase (Mesorhizobium japonicum (strain LMG 29417 / CECT 9101 / MAFF 303099) (Mesorhizobium loti (strain MAFF 303099))).